A 289-amino-acid chain; its full sequence is ATP synthase gamma chain (289 aa).

This sequence belongs to the ATPase gamma chain family. F-type ATPases have 2 components, CF(1) - the catalytic core - and CF(0) - the membrane proton channel. CF(1) has five subunits: alpha(3), beta(3), gamma(1), delta(1), epsilon(1). CF(0) has three main subunits: a, b and c.

It localises to the cell inner membrane. Produces ATP from ADP in the presence of a proton gradient across the membrane. The gamma chain is believed to be important in regulating ATPase activity and the flow of protons through the CF(0) complex. The chain is ATP synthase gamma chain from Actinobacillus succinogenes (strain ATCC 55618 / DSM 22257 / CCUG 43843 / 130Z).